A 490-amino-acid chain; its full sequence is Katanin p60 ATPase-containing subunit A-like 1 (490 aa).

Met1 carries the N-acetylmethionine modification. A disordered region spans residues 95–178; the sequence is DPAVWPPPVP…MQDGASDGDI (84 aa). Basic and acidic residues predominate over residues 116–127; sequence PNREVRPLRKDV. Residues 128-139 show a composition bias toward low complexity; sequence AGVGARGPVGRA. The segment covering 143–169 has biased composition (basic and acidic residues); that stretch reads SKSEKPSTNKDKDYRARGRDDKGRKNM. Ser174 carries the phosphoserine modification. An ATP-binding site is contributed by 248 to 255; that stretch reads GPPGTGKT.

The protein belongs to the AAA ATPase family. Katanin p60 subunit A1 subfamily. A-like 1 sub-subfamily. In terms of assembly, interacts with KATNB1 and KATNBL1.

It is found in the cytoplasm. It localises to the cytoskeleton. The protein localises to the spindle pole. The protein resides in the spindle. It catalyses the reaction n ATP + n H2O + a microtubule = n ADP + n phosphate + (n+1) alpha/beta tubulin heterodimers.. Its function is as follows. Regulates microtubule dynamics in Sertoli cells, a process that is essential for spermiogenesis and male fertility. Severs microtubules in an ATP-dependent manner, promoting rapid reorganization of cellular microtubule arrays. Has microtubule-severing activity in vitro. This Sorex araneus (Eurasian common shrew) protein is Katanin p60 ATPase-containing subunit A-like 1.